The sequence spans 389 residues: Glutamate 5-kinase (389 aa).

K26 provides a ligand contact to ATP. Residues S66, D153, and N167 each contribute to the substrate site. 187–188 (TD) is an ATP binding site. One can recognise a PUA domain in the interval 293 to 371 (AGTLFLDQGA…EQIEWILGHR (79 aa)).

The protein belongs to the glutamate 5-kinase family.

It is found in the cytoplasm. The catalysed reaction is L-glutamate + ATP = L-glutamyl 5-phosphate + ADP. The protein operates within amino-acid biosynthesis; L-proline biosynthesis; L-glutamate 5-semialdehyde from L-glutamate: step 1/2. Functionally, catalyzes the transfer of a phosphate group to glutamate to form L-glutamate 5-phosphate. This Rhodopirellula baltica (strain DSM 10527 / NCIMB 13988 / SH1) protein is Glutamate 5-kinase.